The primary structure comprises 421 residues: Non-homologous end-joining factor LIF1 (421 aa).

The interaction with NEJ1 stretch occupies residues 1–196 (MSQLTEFISC…VEQLAREREL (196 aa)). A disordered region spans residues 365-421 (GIQISAGRSDEDYGDISGSESETDASAGEKKSSNHSEQSGNDREPCLQTESETDIET). Residues 391–409 (AGEKKSSNHSEQSGNDREP) are compositionally biased toward basic and acidic residues.

It belongs to the XRCC4-XLF family. XLF subfamily. In terms of assembly, interacts with DNL4 (via BRCT domain). Interacts (via N-terminus) with NEJ1 (via C-terminus); the interaction is direct. The DNL4-LIF1 complex interacts with POL4.

The protein localises to the cytoplasm. It is found in the nucleus. Involved in non-homologous repair of DNA double-strand breaks. Stabilizes DNL4. The polypeptide is Non-homologous end-joining factor LIF1 (LIF1) (Saccharomyces cerevisiae (strain ATCC 204508 / S288c) (Baker's yeast)).